The primary structure comprises 375 residues: Probable UDP-N-acetylglucosamine 2-epimerase (375 aa).

Belongs to the UDP-N-acetylglucosamine 2-epimerase family.

The protein resides in the cytoplasm. The catalysed reaction is UDP-N-acetyl-alpha-D-glucosamine = UDP-N-acetyl-alpha-D-mannosamine. The protein operates within glycan metabolism; exopolysaccharide EPS I biosynthesis. Functionally, may be involved in synthesis of N-acetyltrideoxygalactose, a component of exopolysaccharide EPS I which functions as a virulence factor. The polypeptide is Probable UDP-N-acetylglucosamine 2-epimerase (epsC) (Ralstonia solanacearum (Pseudomonas solanacearum)).